Consider the following 727-residue polypeptide: Elongation factor 2 (727 aa).

The 242-residue stretch at 19-260 (DQIRNIGICA…MVVTHLPNPV (242 aa)) folds into the tr-type G domain. GTP contacts are provided by residues 28–35 (AHIDHGKT), 94–98 (DTPGH), and 148–151 (NKVD). His603 is modified (diphthamide).

Belongs to the TRAFAC class translation factor GTPase superfamily. Classic translation factor GTPase family. EF-G/EF-2 subfamily.

Its subcellular location is the cytoplasm. Catalyzes the GTP-dependent ribosomal translocation step during translation elongation. During this step, the ribosome changes from the pre-translocational (PRE) to the post-translocational (POST) state as the newly formed A-site-bound peptidyl-tRNA and P-site-bound deacylated tRNA move to the P and E sites, respectively. Catalyzes the coordinated movement of the two tRNA molecules, the mRNA and conformational changes in the ribosome. This Methanococcus aeolicus (strain ATCC BAA-1280 / DSM 17508 / OCM 812 / Nankai-3) protein is Elongation factor 2.